Reading from the N-terminus, the 283-residue chain is uncharacterized protein (283 aa).

3 Solcar repeats span residues 14-95 (QPVW…LKHL), 102-185 (NDHA…SEAV), and 190-274 (GLAL…TLQG). 6 helical membrane-spanning segments follow: residues 20–40 (TLAGGISSVICRFMIAPFDVI), 70–90 (GNVVAELLYLVYGAAEFVAFS), 105–125 (AVNFLCGTSAGIFATLTSYPL), 157–177 (FFPGLKFSVIQIGPYAGCFFM), 184–204 (AVLSPLGLALSSTLSGVIAGA), and 249–266 (GLSVSMLKVAPGRAITML).

Belongs to the mitochondrial carrier (TC 2.A.29) family.

The protein localises to the mitochondrion inner membrane. This is an uncharacterized protein from Schizosaccharomyces pombe (strain 972 / ATCC 24843) (Fission yeast).